The chain runs to 502 residues: L-amino-acid oxidase BmooLAAO-I (502 aa).

The first 18 residues, 1-18 (MNVFFTFSLLFLAALGSC), serve as a signal peptide directing secretion. Cys-28 and Cys-191 are joined by a disulfide. FAD contacts are provided by residues 61-62 (MS), 81-82 (EA), Arg-89, and 105-108 (GPMR). Arg-108 contacts substrate. Asn-190 carries an N-linked (GlcNAc...) asparagine glycan. His-241 serves as a coordination point for substrate. Val-279 is an FAD binding site. Cys-349 and Cys-430 are oxidised to a cystine. Position 390 (Tyr-390) interacts with substrate. FAD contacts are provided by residues Glu-475 and 482-487 (GWIDST). 482-483 (GW) is a binding site for substrate.

The protein belongs to the flavin monoamine oxidase family. FIG1 subfamily. Homodimer; non-covalently linked. FAD serves as cofactor. In terms of processing, N-glycosylated. The enzymatic activity is not affected by deglycosylation. As to expression, expressed by the venom gland.

The protein localises to the secreted. The catalysed reaction is an L-alpha-amino acid + O2 + H2O = a 2-oxocarboxylate + H2O2 + NH4(+). It carries out the reaction L-leucine + O2 + H2O = 4-methyl-2-oxopentanoate + H2O2 + NH4(+). It catalyses the reaction L-phenylalanine + O2 + H2O = 3-phenylpyruvate + H2O2 + NH4(+). The enzyme catalyses L-tryptophan + O2 + H2O = indole-3-pyruvate + H2O2 + NH4(+). The catalysed reaction is L-methionine + O2 + H2O = 4-methylsulfanyl-2-oxobutanoate + H2O2 + NH4(+). It carries out the reaction L-isoleucine + O2 + H2O = (S)-3-methyl-2-oxopentanoate + H2O2 + NH4(+). It catalyses the reaction L-histidine + O2 + H2O = 3-(imidazol-5-yl)pyruvate + H2O2 + NH4(+). The enzyme catalyses L-tyrosine + O2 + H2O = 3-(4-hydroxyphenyl)pyruvate + H2O2 + NH4(+). The catalysed reaction is L-alanine + O2 + H2O = pyruvate + H2O2 + NH4(+). It carries out the reaction L-valine + O2 + H2O = 3-methyl-2-oxobutanoate + H2O2 + NH4(+). With respect to regulation, its enzymatic activities is reduced when it is exposed to Ca(2+), Zn(2+), Al(3+), Cu(2+) or Ni(2+) salts. Catalyzes an oxidative deamination of predominantly hydrophobic and aromatic L-amino acids, thus producing hydrogen peroxide that may contribute to the toxicity of the venom. Shows very high activity on L-Met, and L-Leu, high activity on L-Ile, L-Phe and L-Tyr and moderate activity on L-His, L-Val and L-Ala. Exhibits diverse biological activities, such as edema, apoptosis of tumor cell lines, antibacterial activities against both Gram-positive and Gram-negative bacteria, as well as induction of platelet aggregation. Effects of snake L-amino oxidases on platelets are controversial, since they either induce aggregation or inhibit agonist-induced aggregation. These different effects are probably due to different experimental conditions. Unlike other snake venom L-amino acid oxidases, does not induce hemorrhage. It may also induce hemolysis. Has parasiticidal activities against and leishmania, as a result of enzyme-catalyzed hydrogen peroxide production. This Bothrops moojeni (Lance-headed viper) protein is L-amino-acid oxidase BmooLAAO-I.